We begin with the raw amino-acid sequence, 599 residues long: uncharacterized protein (599 aa).

Positions 1–13 (MSSSSSHNSFSGS) are enriched in low complexity. Disordered regions lie at residues 1-27 (MSSS…IDGL) and 41-86 (YPSN…DDTN). The segment covering 14 to 27 (KTNAAEGQNSIDGL) has biased composition (polar residues). The span at 44–70 (NEEKEVKETDIVPDENKVNELDVHKQS) shows a compositional bias: basic and acidic residues. 14 helical membrane-spanning segments follow: residues 97–117 (IVVP…TIVT), 135–155 (WIGS…GVFC), 162–182 (IVLY…GASQ), 192–212 (AIQG…ISDI), 223–243 (GILA…GGAI), 251–271 (WIFF…VVFL), 290–310 (FIGL…ISLG), 321–341 (ILCY…YDTF), 359–379 (AALL…AYYV), 396–416 (VHTI…GMVL), 423–443 (LPLI…MICV), 452–472 (VMGL…PPLI), 489–509 (TLMF…EVIF), and 552–572 (VIWI…FFIK).

Belongs to the major facilitator superfamily. TCR/Tet family.

The protein localises to the membrane. This is an uncharacterized protein from Schizosaccharomyces pombe (strain 972 / ATCC 24843) (Fission yeast).